A 208-amino-acid chain; its full sequence is Thymidylate kinase (208 aa).

Residue 10 to 17 (GPDGSGKT) coordinates ATP.

It belongs to the thymidylate kinase family.

It carries out the reaction dTMP + ATP = dTDP + ADP. Phosphorylation of dTMP to form dTDP in both de novo and salvage pathways of dTTP synthesis. The protein is Thymidylate kinase of Listeria monocytogenes serotype 4b (strain CLIP80459).